We begin with the raw amino-acid sequence, 231 residues long: Glutathione-S-transferase (231 aa).

The GST N-terminal domain maps to 15–98 (LFAVKGTATS…YIADAYDKDG (84 aa)).

The protein belongs to the GST superfamily.

It catalyses the reaction RX + glutathione = an S-substituted glutathione + a halide anion + H(+). Conjugation of reduced glutathione to a wide number of exogenous and endogenous hydrophobic electrophiles. In Alternaria alternata (Alternaria rot fungus), this protein is Glutathione-S-transferase.